Consider the following 195-residue polypeptide: Small ribosomal subunit protein uS4c (195 aa).

Residues 82–143 (MRLDNILFRL…KQRSKALIQN (62 aa)) enclose the S4 RNA-binding domain.

The protein belongs to the universal ribosomal protein uS4 family. Part of the 30S ribosomal subunit. Contacts protein S5. The interaction surface between S4 and S5 is involved in control of translational fidelity.

It is found in the plastid. The protein resides in the chloroplast. Functionally, one of the primary rRNA binding proteins, it binds directly to 16S rRNA where it nucleates assembly of the body of the 30S subunit. Its function is as follows. With S5 and S12 plays an important role in translational accuracy. The protein is Small ribosomal subunit protein uS4c (rps4) of Gladiolus murielae (Abyssinian gladiolus).